A 615-amino-acid polypeptide reads, in one-letter code: Dehydrogenase str4 (615 aa).

FAD contacts are provided by residues 45-46 (TA), 66-67 (EA), and 123-126 (NGSM). The active-site Proton acceptor is histidine 552. FAD contacts are provided by residues alanine 585 and 596 to 597 (PA).

It belongs to the GMC oxidoreductase family. As to quaternary structure, homodimer. The cofactor is FAD.

Its pathway is mycotoxin biosynthesis. Its function is as follows. Dehydrogenase; part of the gene cluster that mediates the biosynthesis of strobilurin A, an antifungal polyketide that contains a key beta-methoxyacrylate toxophore that targets the complex III of the mitochondrial electron transport chain. Strobilurin biosynthesis begins with construction of benzoyl CoA by step-wise elimination of ammonia from phenylalanine by the phenylalanine ammonia-lyase str11, oxygenation by str8 and retro-Claisen reaction to form benzoic acid, which is activated to its CoA thiolester benzoyl CoA by the dedicated CoA ligase str10. Benzoyl CoA forms the starter unit for the highly reducing polyketide synthase stpks1 that produces the polyketide prestrobilutin A. The FAD-dependent oxygenase str9 then catalyzes the key oxidative rearrangement responsible for the creation of the beta-methoxyacrylate toxophore. Str9 performs epoxidation of the 2,3 olefin of prestrobilutin A, followed by Meinwald rearrangement to furnish the aldehyde intermediate. Rapid enolization of the aldehyde intermediate would give the beta-methoxyacrylate skeleton and methylations catalyzed by str2 and str3 complete the synthesis and lead to the production of strobilurin A. The short-chain dehydrogenase stl2 and the dehydrogenase str4 play a role in the shunt pathway leading to the production of bolineol. The cluster encodes no obvious halogenase gene that could be involved in production of strobilurin B, nor any obvious dimethylallyl-transferase that could be involved in the production of strobilurin G. It is possible that unknown proteins encoded in, or near, the cluster (such as str1 or stl1) may form new classes of halogenases or dimethylally-transferases, or that the responsible genes are located elsewhere on the genome. Similarly, proteins encoded by str5/str6 hydrolases appear to have no chemical role in the biosynthesis of strobilurin A. Finally, no obvious self-resistance gene is found within the cluster. This chain is Dehydrogenase str4, found in Strobilurus tenacellus.